Here is a 393-residue protein sequence, read N- to C-terminus: Lipid-A-disaccharide synthase (393 aa).

It belongs to the LpxB family.

The enzyme catalyses a lipid X + a UDP-2-N,3-O-bis[(3R)-3-hydroxyacyl]-alpha-D-glucosamine = a lipid A disaccharide + UDP + H(+). It functions in the pathway bacterial outer membrane biogenesis; LPS lipid A biosynthesis. Functionally, condensation of UDP-2,3-diacylglucosamine and 2,3-diacylglucosamine-1-phosphate to form lipid A disaccharide, a precursor of lipid A, a phosphorylated glycolipid that anchors the lipopolysaccharide to the outer membrane of the cell. The polypeptide is Lipid-A-disaccharide synthase (Bordetella petrii (strain ATCC BAA-461 / DSM 12804 / CCUG 43448)).